The chain runs to 106 residues: Immunoglobulin lambda constant 7 (106 aa).

In terms of domain architecture, Ig-like spans 7-101 (PSVTLFPPSS…EGSTVEKTVA (95 aa)). Cys-28 and Cys-87 are oxidised to a cystine.

Immunoglobulins are composed of two identical heavy chains and two identical light chains; disulfide-linked.

Its subcellular location is the secreted. The protein resides in the cell membrane. Functionally, constant region of immunoglobulin light chains. Immunoglobulins, also known as antibodies, are membrane-bound or secreted glycoproteins produced by B lymphocytes. In the recognition phase of humoral immunity, the membrane-bound immunoglobulins serve as receptors which, upon binding of a specific antigen, trigger the clonal expansion and differentiation of B lymphocytes into immunoglobulins-secreting plasma cells. Secreted immunoglobulins mediate the effector phase of humoral immunity, which results in the elimination of bound antigens. The antigen binding site is formed by the variable domain of one heavy chain, together with that of its associated light chain. Thus, each immunoglobulin has two antigen binding sites with remarkable affinity for a particular antigen. The variable domains are assembled by a process called V-(D)-J rearrangement and can then be subjected to somatic hypermutations which, after exposure to antigen and selection, allow affinity maturation for a particular antigen. The protein is Immunoglobulin lambda constant 7 of Homo sapiens (Human).